Consider the following 254-residue polypeptide: UPF0603 protein YdjH (254 aa).

Residues 1–29 (MRGFFGKAIFVVLAVFIMMPLLGIEAVRA) form the signal peptide. A helical transmembrane segment spans residues 166-186 (IFFTWWFQLIAAIAVGGIAVS). Residues 223 to 235 (VTRERKPSDKDSG) show a composition bias toward basic and acidic residues. The tract at residues 223-254 (VTRERKPSDKDSGSDGGVTKGGTSYSGSRGSF) is disordered. Over residues 243–254 (GGTSYSGSRGSF) the composition is skewed to polar residues.

It belongs to the UPF0603 family.

Its subcellular location is the cell membrane. The protein is UPF0603 protein YdjH (ydjH) of Bacillus subtilis (strain 168).